The sequence spans 202 residues: P25 protein (202 aa).

One can recognise a Flavodoxin-like domain in the interval 7–195 (VAIVIYSTYG…EIARIQGETF (189 aa)). Residue Ser181 is modified to Phosphoserine.

It belongs to the WrbA family. Homodimer.

Functionally, unknown. Target of pap1 transcription factor. Confers brefeldin A resistance in S.pombe. The chain is P25 protein (obr1) from Schizosaccharomyces pombe (strain 972 / ATCC 24843) (Fission yeast).